Reading from the N-terminus, the 647-residue chain is Zinc finger protein 567 (647 aa).

The 46-residue stretch at Met-32 to Asn-77 folds into the KRAB domain. Glycyl lysine isopeptide (Lys-Gly) (interchain with G-Cter in SUMO2) cross-links involve residues Lys-173, Lys-202, and Lys-217. A C2H2-type 1; degenerate zinc finger spans residues Phe-210 to Tyr-232. C2H2-type zinc fingers lie at residues His-253–His-275, Tyr-281–His-303, Phe-309–His-331, Tyr-337–His-359, Tyr-365–His-387, Tyr-393–His-415, and Tyr-421–His-443. Residue Lys-447 forms a Glycyl lysine isopeptide (Lys-Gly) (interchain with G-Cter in SUMO2) linkage. 7 C2H2-type zinc fingers span residues Tyr-449–His-471, Tyr-477–His-499, Tyr-505–His-527, Tyr-533–His-555, Tyr-561–His-583, Tyr-589–His-611, and Tyr-617–His-639.

It belongs to the krueppel C2H2-type zinc-finger protein family.

Its subcellular location is the nucleus. Its function is as follows. May be involved in transcriptional regulation. The protein is Zinc finger protein 567 (ZNF567) of Bos taurus (Bovine).